The sequence spans 450 residues: Probable ECA polymerase (450 aa).

Transmembrane regions (helical) follow at residues 6 to 26 (FSGLFVVWLLCTLFIATLTWF), 37 to 57 (VFFSLLFLLTFFFGFPLTSVL), 63 to 83 (VGVAPPEILLQALLSAGCFYA), 118 to 138 (VILMGIALVSVGIFFMHNGFL), 155 to 175 (GVALKRFFYFFIPAMLVVYFL), 181 to 201 (AWLFFLVSTVAFGLLTYMIVG), 207 to 227 (IIIAFAIFLFIGIIRGWISLW), 228 to 248 (MLAAAGVLGIVGMFWLALKRY), 341 to 361 (LVVMGGALFIPLGAIVVGLII), 378 to 398 (YKAAILHSFCFGAIFNMIVLA), and 410 to 430 (VFFIVVFGACLMIAKLLYWLF).

Belongs to the WzyE family. As to quaternary structure, probably part of a complex composed of WzxE, WzyE and WzzE.

The protein resides in the cell inner membrane. It functions in the pathway bacterial outer membrane biogenesis; enterobacterial common antigen biosynthesis. Its function is as follows. Probably involved in the polymerization of enterobacterial common antigen (ECA) trisaccharide repeat units. The polypeptide is Probable ECA polymerase (Escherichia coli O127:H6 (strain E2348/69 / EPEC)).